The primary structure comprises 585 residues: Mitochondrial sodium/calcium exchanger protein (585 aa).

A signal peptide spans 1–26 (MAGRWLDPLWAPGFLCVALILETASG). The Extracellular portion of the chain corresponds to 27 to 95 (AGDLSTKAHG…GIFCYFPPNL (69 aa)). N-linked (GlcNAc...) asparagine glycosylation is present at asparagine 46. A helical membrane pass occupies residues 96–116 (LPLAITLYVFWLLYLFLILGV). Over 117-140 (TAAKFFCPNLSAISTSLKLSHNVA) the chain is Cytoplasmic. A helical transmembrane segment spans residues 141-161 (GVTFLAFGNGAPDIFSALVAF). The Extracellular segment spans residues 162 to 168 (SDPRTAG). The chain crosses the membrane as a helical span at residues 169 to 189 (LAIGALFGAGVLVTTVVAGGI). The Cytoplasmic portion of the chain corresponds to 190–205 (TILRPFMAASRPFLRD). A helical membrane pass occupies residues 206-226 (ITFYMVAVFLTFTALYLGRIT). Position 227 (leucine 227) is a topological domain, extracellular. The helical transmembrane segment at 228–247 (VWALGYLGLYVFYVVTVIIC) threads the bilayer. At 248–325 (TWVYQRQRSR…KWRTQSISCK (78 aa)) the chain is on the cytoplasmic side. Residue serine 258 is modified to Phosphoserine; by PKA. Residues 326-346 (LLKVAKLPVEFLLLLTVPVVD) traverse the membrane as a helical segment. Topologically, residues 347-360 (PDKDDRNWKRPLNC) are extracellular. Residues 361–381 (LQLVISPLVLVLTLQSGVYGI) form a helical membrane-spanning segment. Topologically, residues 382-383 (YE) are cytoplasmic. Residues 384-404 (IGGLLPVWAVVVIVGTALASV) form a helical membrane-spanning segment. Topologically, residues 405 to 416 (TFFATSNSEPPR) are extracellular. A helical transmembrane segment spans residues 417–437 (LHWLFAFLGFLTSALWINAAA). Topologically, residues 438-445 (TEVVNILR) are cytoplasmic. A helical membrane pass occupies residues 446–466 (SLGVVFRLSNTVLGLTLLAWG). At 467-491 (NSIGDAFSDFTLARQGYPRMAFSAC) the chain is on the extracellular side. Residues 492-512 (FGGIIFNILVGVGLGCLLQIV) traverse the membrane as a helical segment. Residues 513–525 (RSHASEVKLEPDG) are Cytoplasmic-facing. Residues 526 to 546 (LLVWVLASALGLSLVFSLVSV) form a helical membrane-spanning segment. The Extracellular portion of the chain corresponds to 547-559 (PLQCFQLSKAYGL). Residues 560 to 580 (CLLLFYICFIVVVLLTEFGVI) traverse the membrane as a helical segment. Residues 581–585 (HLKAD) lie on the Cytoplasmic side of the membrane.

Belongs to the Ca(2+):cation antiporter (CaCA) (TC 2.A.19) family. SLC24A subfamily. In terms of processing, phosphorylation at Ser-258 by PKA prevents calcium overload. As to expression, widely expressed. Present at higher level in pancreas, stomach, skeletal muscle and skin (at protein level). Ubiquitously expressed.

The protein resides in the mitochondrion inner membrane. The enzyme catalyses Ca(2+)(in) + 3 Na(+)(out) = Ca(2+)(out) + 3 Na(+)(in). It catalyses the reaction 3 Li(+)(out) + Ca(2+)(in) = 3 Li(+)(in) + Ca(2+)(out). With respect to regulation, inhibited by the sodium/calcium exchanger inhibitor CGP-37157. Strongly inhibited by zinc. In terms of biological role, mitochondrial sodium/calcium antiporter that mediates sodium-dependent calcium efflux from mitochondrion, by mediating the exchange of 3 sodium ions per 1 calcium ion. Plays a central role in mitochondrial calcium homeostasis by mediating mitochondrial calcium extrusion: calcium efflux is essential for mitochondrial function and cell survival, notably in cardiomyocytes. Regulates rates of glucose-dependent insulin secretion in pancreatic beta-cells during the first phase of insulin secretion: acts by mediating efflux of calcium from mitochondrion, thereby affecting cytoplasmic calcium responses. Required for store-operated Ca(2+) entry (SOCE) and Ca(2+) release-activated Ca(2+) (CRAC) channel regulation: sodium transport by SLC8B1 leads to promote calcium-shuttling that modulates mitochondrial redox status, thereby regulating SOCE activity. Involved in B-lymphocyte chemotaxis. Able to transport Ca(2+) in exchange of either Li(+) or Na(+), explaining how Li(+) catalyzes Ca(2+) exchange. In contrast to other members of the family its function is independent of K(+). This Rattus norvegicus (Rat) protein is Mitochondrial sodium/calcium exchanger protein.